The sequence spans 328 residues: DNA-directed RNA polymerase subunit alpha (328 aa).

The segment at 1-232 is alpha N-terminal domain (alpha-NTD); the sequence is MHNSLAELIK…QHLAILVDLK (232 aa). Residues 246–328 are alpha C-terminal domain (alpha-CTD); sequence FDPLLLHPVD…PPEGLKKLNQ (83 aa).

Belongs to the RNA polymerase alpha chain family. In terms of assembly, homodimer. The RNAP catalytic core consists of 2 alpha, 1 beta, 1 beta' and 1 omega subunit. When a sigma factor is associated with the core the holoenzyme is formed, which can initiate transcription.

It carries out the reaction RNA(n) + a ribonucleoside 5'-triphosphate = RNA(n+1) + diphosphate. Its function is as follows. DNA-dependent RNA polymerase catalyzes the transcription of DNA into RNA using the four ribonucleoside triphosphates as substrates. This chain is DNA-directed RNA polymerase subunit alpha, found in Methylococcus capsulatus (strain ATCC 33009 / NCIMB 11132 / Bath).